Reading from the N-terminus, the 336-residue chain is MKKWFPALLFSLCVSGESSAWNNIVFYSLGDVNSYQGGNVVITQRPQFITSWRPGIATVTWNQCNGPEFADGFWAYYREYIAWVVFPKKVMTQNGYPLFIEVHNKGSWSEENTGDNDSYFFLKGYKWDERAFDAGNLCQKPGEITRLTEKFDDIIFKVALPADLPLGDYSVKIPYTSGMQRHFASYLGARFKIPYNVAKTLPRENEMLFLFKNIGGCRPSAQSLEIKHGDLSINSANNHYAAQTLSVSCDVPANIRFMLLRNTTPTYSHGKKFSVGLGHGWDSIVSVNGVDTGETTMRWYKAGTQNLTIGSRLYGESSKIQPGVLSGSATLLMILP.

An N-terminal signal peptide occupies residues M1–A20. Cystine bridges form between C64–C138 and C217–C249. D-galactose is bound by residues E79 and G124–W127.

This sequence belongs to the adhesin PapG family.

The protein resides in the secreted. Its subcellular location is the fimbrium. In terms of biological role, tip adhesin component of type P pili that plays a critical role in kidney infection through targeted interaction with the globoseries glycolipids containing the Gal-alpha(1-4)-Gal disaccharide present on uroepithelial cells. In turn, transcriptionally regulates host gene expression in kidney cells, leading to inflammatory pathway activation and renal tissue damage. Acts thereby as key determinant of invasive uropathogenic E.coli (UPEC), which cause pyelonephritis and urinary-source bacteremia. The polypeptide is Fimbrial adhesin PapGII (Escherichia coli).